We begin with the raw amino-acid sequence, 702 residues long: Elongation factor G 1 (702 aa).

The region spanning 8–290 (ERYRNIGISA…AVIDFLPSPV (283 aa)) is the tr-type G domain. GTP is bound by residues 17–24 (AHIDAGKT), 88–92 (DTPGH), and 142–145 (NKMD).

The protein belongs to the TRAFAC class translation factor GTPase superfamily. Classic translation factor GTPase family. EF-G/EF-2 subfamily.

Its subcellular location is the cytoplasm. Functionally, catalyzes the GTP-dependent ribosomal translocation step during translation elongation. During this step, the ribosome changes from the pre-translocational (PRE) to the post-translocational (POST) state as the newly formed A-site-bound peptidyl-tRNA and P-site-bound deacylated tRNA move to the P and E sites, respectively. Catalyzes the coordinated movement of the two tRNA molecules, the mRNA and conformational changes in the ribosome. In Cupriavidus pinatubonensis (strain JMP 134 / LMG 1197) (Cupriavidus necator (strain JMP 134)), this protein is Elongation factor G 1.